Here is a 176-residue protein sequence, read N- to C-terminus: Ribosome rescue factor SmrB (176 aa).

The disordered stretch occupies residues 29 to 51; it reads TIIQQPKKNTKQKEIKRSNREAS. The segment covering 39–51 has biased composition (basic and acidic residues); the sequence is KQKEIKRSNREAS. The 76-residue stretch at 97–172 folds into the Smr domain; the sequence is LDMHGMTQQE…GDGALLVLLS (76 aa).

It belongs to the SmrB family. As to quaternary structure, associates with collided ribosomes, but not with correctly translating polysomes.

Acts as a ribosome collision sensor. Detects stalled/collided disomes (pairs of ribosomes where the leading ribosome is stalled and a second ribosome has collided with it) and endonucleolytically cleaves mRNA at the 5' boundary of the stalled ribosome. Stalled/collided disomes form a new interface (primarily via the 30S subunits) that binds SmrB. Cleaved mRNA becomes available for tmRNA ligation, leading to ribosomal subunit dissociation and rescue of stalled ribosomes. In Vibrio parahaemolyticus serotype O3:K6 (strain RIMD 2210633), this protein is Ribosome rescue factor SmrB.